A 302-amino-acid polypeptide reads, in one-letter code: Sulfate adenylyltransferase subunit 2 (302 aa).

The tract at residues 280–302 (RQGRLIDSDQSASMEQKKRQGYF) is disordered.

The protein belongs to the PAPS reductase family. CysD subfamily. As to quaternary structure, heterodimer composed of CysD, the smaller subunit, and CysN.

It catalyses the reaction sulfate + ATP + H(+) = adenosine 5'-phosphosulfate + diphosphate. It participates in sulfur metabolism; hydrogen sulfide biosynthesis; sulfite from sulfate: step 1/3. In terms of biological role, with CysN forms the ATP sulfurylase (ATPS) that catalyzes the adenylation of sulfate producing adenosine 5'-phosphosulfate (APS) and diphosphate, the first enzymatic step in sulfur assimilation pathway. APS synthesis involves the formation of a high-energy phosphoric-sulfuric acid anhydride bond driven by GTP hydrolysis by CysN coupled to ATP hydrolysis by CysD. The protein is Sulfate adenylyltransferase subunit 2 of Shewanella sp. (strain ANA-3).